A 501-amino-acid polypeptide reads, in one-letter code: ADP,ATP carrier protein 3 (501 aa).

Transmembrane regions (helical) follow at residues 23–43 (LKLF…FGAL), 59–79 (IISF…TVLY), 90–110 (YIFY…AYII), 146–166 (YALM…LMFW), 183–203 (PVLG…LVFF), 227–247 (IMLQ…MLLF), 293–313 (IALL…PWKA), 326–346 (VNFM…FMII), 361–381 (LLTP…IIFI), 387–407 (CFGD…QNIL), 446–466 (FGKS…PTAT), and 470–490 (IIIY…WNVI).

This sequence belongs to the ADP/ATP translocase tlc family.

It is found in the cell membrane. Provides the rickettsial cell with host ATP in exchange for rickettsial ADP. This is an obligate exchange system. This energy acquiring activity is an important component of rickettsial parasitism. The protein is ADP,ATP carrier protein 3 (tlcC) of Rickettsia conorii (strain ATCC VR-613 / Malish 7).